Here is a 349-residue protein sequence, read N- to C-terminus: Estrogen receptor (349 aa).

Residues 1–5 (YEVGM) constitute a DNA-binding region (nuclear receptor). A disordered region spans residues 1–38 (YEVGMMKGGIRKDRRGGRMLKHKRQREENDSRNAGALT). Over residues 12 to 24 (KDRRGGRMLKHKR) the composition is skewed to basic residues. In terms of domain architecture, NR LBD spans 65–301 (TADQMVSALL…DLLLEMLDAH (237 aa)). The tract at residues 306–327 (PAAKGSPPSEDDPLNQLAVPSP) is disordered.

It belongs to the nuclear hormone receptor family. NR3 subfamily. In terms of assembly, binds DNA as a homodimer. Can form a heterodimer with ER-beta.

It localises to the nucleus. In terms of biological role, the steroid hormones and their receptors are involved in the regulation of eukaryotic gene expression and affect cellular proliferation and differentiation in target tissues. In Anolis carolinensis (Green anole), this protein is Estrogen receptor (ESR1).